A 101-amino-acid chain; its full sequence is ATP synthase subunit c (101 aa).

2 helical membrane-spanning segments follow: residues 31–51 and 81–101; these read AFAYLGAGLAMIGVIGVGAGQ and AISETSSIYALLVALILIFVG.

Belongs to the ATPase C chain family. In terms of assembly, F-type ATPases have 2 components, F(1) - the catalytic core - and F(0) - the membrane proton channel. F(1) has five subunits: alpha(3), beta(3), gamma(1), delta(1), epsilon(1). F(0) has three main subunits: a(1), b(2) and c(10-14). The alpha and beta chains form an alternating ring which encloses part of the gamma chain. F(1) is attached to F(0) by a central stalk formed by the gamma and epsilon chains, while a peripheral stalk is formed by the delta and b chains.

It localises to the cell membrane. In terms of biological role, f(1)F(0) ATP synthase produces ATP from ADP in the presence of a proton or sodium gradient. F-type ATPases consist of two structural domains, F(1) containing the extramembraneous catalytic core and F(0) containing the membrane proton channel, linked together by a central stalk and a peripheral stalk. During catalysis, ATP synthesis in the catalytic domain of F(1) is coupled via a rotary mechanism of the central stalk subunits to proton translocation. Its function is as follows. Key component of the F(0) channel; it plays a direct role in translocation across the membrane. A homomeric c-ring of between 10-14 subunits forms the central stalk rotor element with the F(1) delta and epsilon subunits. This Mesomycoplasma hyopneumoniae (strain J / ATCC 25934 / NCTC 10110) (Mycoplasma hyopneumoniae) protein is ATP synthase subunit c.